The chain runs to 152 residues: Nucleoside diphosphate kinase (152 aa).

ATP is bound by residues lysine 11, phenylalanine 59, arginine 87, threonine 93, arginine 104, and asparagine 114. Histidine 117 acts as the Pros-phosphohistidine intermediate in catalysis.

It belongs to the NDK family. As to quaternary structure, homotetramer. Mg(2+) is required as a cofactor.

The protein localises to the cytoplasm. It catalyses the reaction a 2'-deoxyribonucleoside 5'-diphosphate + ATP = a 2'-deoxyribonucleoside 5'-triphosphate + ADP. It carries out the reaction a ribonucleoside 5'-diphosphate + ATP = a ribonucleoside 5'-triphosphate + ADP. In terms of biological role, major role in the synthesis of nucleoside triphosphates other than ATP. The ATP gamma phosphate is transferred to the NDP beta phosphate via a ping-pong mechanism, using a phosphorylated active-site intermediate. This chain is Nucleoside diphosphate kinase, found in Prochlorococcus marinus (strain AS9601).